A 118-amino-acid polypeptide reads, in one-letter code: Thioredoxin-like protein CXXS1 (118 aa).

The Thioredoxin domain occupies 2–110 (ARVVKIDSAE…IKKRVDGFVQ (109 aa)).

This sequence belongs to the thioredoxin family. Ubiquitous.

Its subcellular location is the cytoplasm. Its function is as follows. Possesses low disulfide reductase activity, but efficient protein disulfide isomerase activity. Does not possess deglutathionylation activity. The chain is Thioredoxin-like protein CXXS1 (CXXS1) from Arabidopsis thaliana (Mouse-ear cress).